Here is a 287-residue protein sequence, read N- to C-terminus: Protease HtpX (287 aa).

2 helical membrane-spanning segments follow: residues 4–24 (VFLLIATNLAILLVASIVMSI) and 33–53 (GGLLVFAAIFGFGGSFISLAI). His139 is a Zn(2+) binding site. Residue Glu140 is part of the active site. Position 143 (His143) interacts with Zn(2+). The next 2 helical transmembrane spans lie at 154–174 (LIQGVVNTFVIFAARVVAGII) and 195–215 (GVVFVLDMLFGILASIIVAYF). Position 220 (Glu220) interacts with Zn(2+).

This sequence belongs to the peptidase M48B family. Requires Zn(2+) as cofactor.

It is found in the cell inner membrane. This chain is Protease HtpX, found in Shewanella denitrificans (strain OS217 / ATCC BAA-1090 / DSM 15013).